The sequence spans 219 residues: Flagellin A (219 aa).

Residues 1–12 (MKVKEFMNNKKG) constitute a propeptide that is removed on maturation. Asparagine 38 and asparagine 175 each carry an N-linked (GlcNAc...) asparagine glycan.

This sequence belongs to the archaeal flagellin family. Post-translationally, N-linked glycans consist of the 779 Da trisaccharide beta-ManNAc(Thr)-(1-4)-beta-GlcNAc3NAcA-(1-3)-beta-GlcNAc.

It is found in the archaeal flagellum. Functionally, flagellin is the subunit protein which polymerizes to form the filaments of archaeal flagella. The chain is Flagellin A (flaA) from Methanococcus voltae.